We begin with the raw amino-acid sequence, 43 residues long: uncharacterized protein (43 aa).

A disordered region spans residues 13-43 (QLPRLSRPRQSHLPAQTPQPRLSYPKTRRQI).

This is an uncharacterized protein from Clover yellow mosaic virus (CYMV).